An 84-amino-acid polypeptide reads, in one-letter code: Small ribosomal subunit protein bS18 (84 aa).

Belongs to the bacterial ribosomal protein bS18 family. As to quaternary structure, part of the 30S ribosomal subunit. Forms a tight heterodimer with protein bS6.

Functionally, binds as a heterodimer with protein bS6 to the central domain of the 16S rRNA, where it helps stabilize the platform of the 30S subunit. This chain is Small ribosomal subunit protein bS18, found in Mycoplasma mobile (strain ATCC 43663 / 163K / NCTC 11711) (Mesomycoplasma mobile).